The primary structure comprises 157 residues: Large ribosomal subunit protein uL15 (157 aa).

Residues methionine 1 to proline 56 form a disordered region. Positions isoleucine 23–methionine 35 are enriched in gly residues.

It belongs to the universal ribosomal protein uL15 family. Part of the 50S ribosomal subunit.

Binds to the 23S rRNA. This is Large ribosomal subunit protein uL15 from Synechococcus sp. (strain JA-3-3Ab) (Cyanobacteria bacterium Yellowstone A-Prime).